The following is a 76-amino-acid chain: Protein sigN132 (76 aa).

A compositionally biased stretch (polar residues) spans 1-13 (MLFESISTLSNLK). Residues 1–33 (MLFESISTLSNLKSASKSSMIASTGSTSSKSSN) are disordered. Positions 14–33 (SASKSSMIASTGSTSSKSSN) are enriched in low complexity.

The protein is Protein sigN132 of Dictyostelium discoideum (Social amoeba).